The following is a 294-amino-acid chain: Early 4 ORF6 protein (294 aa).

The Nuclear localization signal motif lies at 239–255 (ARRTRRLMLRAVRIIAE).

Belongs to the adenoviridae E4 30 to 34 kDa protein family. As to quaternary structure, interacts with E1B-55k.

Its subcellular location is the host nucleus. The protein localises to the host cytoplasm. Functionally, plays a major role to prevent cellular inhibition of viral genome replication by nuclear bodies. Assembles an SCF-like E3 ubiquitin ligase complex based on the cellular proteins ELOB, ELOC, CUL5 and RBX1, in cooperation with viral E1B-55K. This viral RING-type ligase ubiquitinates cellular substrates prior to proteasomal degradation: p53/TP53, LIG4, MRE11-RAD50-NBS1 (MRN) complex, ITGA3, DAXX and BLM. This chain is Early 4 ORF6 protein, found in Homo sapiens (Human).